The chain runs to 141 residues: Hemoglobin subunit alpha-1/2/3 (141 aa).

The region spanning 1–141 (VLSPADKTNV…VGTVLTSKYR (141 aa)) is the Globin domain. Phosphoserine is present on Ser3. N6-succinyllysine is present on Lys7. The residue at position 8 (Thr8) is a Phosphothreonine. The residue at position 11 (Lys11) is an N6-succinyllysine. Lys16 bears the N6-acetyllysine; alternate mark. Lys16 carries the N6-succinyllysine; alternate modification. Tyr24 carries the phosphotyrosine modification. The residue at position 35 (Ser35) is a Phosphoserine. An N6-succinyllysine modification is found at Lys40. Residue Ser49 is modified to Phosphoserine. His58 is an O2 binding site. His87 provides a ligand contact to heme b. Ser102 is modified (phosphoserine). Thr108 carries the post-translational modification Phosphothreonine. 2 positions are modified to phosphoserine: Ser124 and Ser131. Residues Thr134 and Thr137 each carry the phosphothreonine modification. Phosphoserine is present on Ser138.

It belongs to the globin family. In terms of assembly, heterotetramer of two alpha chains and two beta chains. Red blood cells.

In terms of biological role, involved in oxygen transport from the lung to the various peripheral tissues. The polypeptide is Hemoglobin subunit alpha-1/2/3 (Macaca nemestrina (Pig-tailed macaque)).